The following is a 478-amino-acid chain: tRNA modification GTPase MnmE (478 aa).

(6S)-5-formyl-5,6,7,8-tetrahydrofolate contacts are provided by Arg-36, Glu-94, and Lys-133. One can recognise a TrmE-type G domain in the interval 230–402 (GIHVVLAGRP…LVETLCAKVG (173 aa)). Asn-240 lines the K(+) pocket. GTP is bound by residues 240-245 (NAGKSS), 259-265 (TDVAGTT), and 284-287 (DTAG). Mg(2+) is bound at residue Ser-244. K(+)-binding residues include Thr-259, Val-261, and Thr-264. Thr-265 provides a ligand contact to Mg(2+). (6S)-5-formyl-5,6,7,8-tetrahydrofolate is bound at residue Lys-478.

It belongs to the TRAFAC class TrmE-Era-EngA-EngB-Septin-like GTPase superfamily. TrmE GTPase family. Homodimer. Heterotetramer of two MnmE and two MnmG subunits. It depends on K(+) as a cofactor.

It localises to the cytoplasm. Functionally, exhibits a very high intrinsic GTPase hydrolysis rate. Involved in the addition of a carboxymethylaminomethyl (cmnm) group at the wobble position (U34) of certain tRNAs, forming tRNA-cmnm(5)s(2)U34. The sequence is that of tRNA modification GTPase MnmE from Psychrobacter cryohalolentis (strain ATCC BAA-1226 / DSM 17306 / VKM B-2378 / K5).